The primary structure comprises 398 residues: Dual specificity protein phosphatase 4 (398 aa).

V2 bears the N-acetylvaline mark. In terms of domain architecture, Rhodanese spans 45-163; that stretch reads SGGKCLLLDC…FSSEYPEFCS (119 aa). Positions 199 to 340 constitute a Tyrosine-protein phosphatase domain; the sequence is GPVEILPFLY…LLQFESQVLT (142 aa). C284 functions as the Phosphocysteine intermediate in the catalytic mechanism. A phosphoserine; by MAPK mark is found at S390 and S395.

This sequence belongs to the protein-tyrosine phosphatase family. Non-receptor class dual specificity subfamily. In terms of assembly, hollow spherical complex composed of 24 subunits with pseudooctahedral symmetry, has a tetramer as the basic unit. Post-translationally, phosphorylation in the C-terminus by ERK1/2 inhibits proteasomal degradation and stabilizes the protein.

Its subcellular location is the nucleus. The enzyme catalyses O-phospho-L-tyrosyl-[protein] + H2O = L-tyrosyl-[protein] + phosphate. It carries out the reaction O-phospho-L-seryl-[protein] + H2O = L-seryl-[protein] + phosphate. It catalyses the reaction O-phospho-L-threonyl-[protein] + H2O = L-threonyl-[protein] + phosphate. Regulates mitogenic signal transduction by dephosphorylating both Thr and Tyr residues on MAP kinases ERK1 and ERK2. This is Dual specificity protein phosphatase 4 (Dusp4) from Mus musculus (Mouse).